A 188-amino-acid polypeptide reads, in one-letter code: Shikimate kinase (188 aa).

21–26 (GAGKTT) is an ATP binding site. Thr25 lines the Mg(2+) pocket. The substrate site is built by Asp43, Arg67, and Gly90. ATP is bound at residue Arg130. A substrate-binding site is contributed by Arg148.

This sequence belongs to the shikimate kinase family. Monomer. Mg(2+) is required as a cofactor.

It is found in the cytoplasm. It catalyses the reaction shikimate + ATP = 3-phosphoshikimate + ADP + H(+). Its pathway is metabolic intermediate biosynthesis; chorismate biosynthesis; chorismate from D-erythrose 4-phosphate and phosphoenolpyruvate: step 5/7. In terms of biological role, catalyzes the specific phosphorylation of the 3-hydroxyl group of shikimic acid using ATP as a cosubstrate. The chain is Shikimate kinase from Geobacillus kaustophilus (strain HTA426).